Reading from the N-terminus, the 791-residue chain is IQ motif and ubiquitin-like domain-containing protein (791 aa).

The segment at 1–73 (MSNQQEKYEA…SDQSFSSLEP (73 aa)) is disordered. Positions 131 to 207 (ATVKVVLIPV…VQVEIFSTNP (77 aa)) constitute a Ubiquitin-like domain. Positions 338–367 (RLKAVIVIQTYYRQWHAKIFVENLRRQKSL) constitute an IQ domain.

In terms of assembly, component of the axonemal radial spoke 1 (RS1) complex, at least composed of spoke head proteins RSPH1, RSPH3, RSPH9 and the cilia-specific component RSPH4A or sperm-specific component RSPH6A, spoke stalk proteins RSPH14, DNAJB13, DYDC1, ROPN1L and NME5, and the anchor protein IQUB. Does not appear to be part of radial spoke complexes 2 or 3 (RS2 or RS3). Interacts with CALM1. Interacts with DNAJB13. Interacts with DYNLL2. Interacts with NME5. Interacts with RSPH3. Interacts with RSPH9. Interacts with ZMYND10. Interacts with calmodulin; the interaction occurs in conditions of low but not high calcium.

The protein localises to the cytoplasm. It localises to the cytoskeleton. The protein resides in the flagellum axoneme. It is found in the cell projection. Its subcellular location is the cilium. Its function is as follows. Adapter protein that anchors the radial spoke 1 (RS1) complex to the A microtubule of outer doublet microtubules in axonemes. The triple radial spokes (RS1, RS2 and RS3) are required to modulate beating of the sperm flagellum. May play a role in inhibiting signaling via MAPK1/ERK2 and MAPK3/ERK1. Additionally, may play a role in the functioning of cilia. Not required for the functioning of tracheal or ependymal cilia. This is IQ motif and ubiquitin-like domain-containing protein (IQUB) from Homo sapiens (Human).